The chain runs to 452 residues: MDRRIFGLENEYGVTCTFRGQRRLSPDEVARYLFRRVVSWGRSSNVFLRNGARLYLDVGSHPEYATPECDNVVELVTHDKAGERILEGLLVDAEKRLREEGIAGDIYLFKNNTDSAGNSYGCHENYLVGRHGEFGRLADVLIPFLVTRQIVCGAGKVLQTPRGAVYCVSQRAEHIWEGVSSATTRSRPIINTRDEPHADAERFRRLHVIVGDSNMSETTMLLKVGATDLVLRMIEAGTVMRDLSLENPIRAIREVSHDMTGRRRVRLANGREASSLEIQQEYLSKARDFVDRRGGDEISHRVLELWERTLNAVETGNLDLVAREIDWVTKYQLIERYRKKYDLPLSSPRVAQLDLAYHDVHRRRGLFYLLQKRGAVERVASDLKIFEAKSVPPQTTRARLRGEFIRKAQEKRRDFTVDWVHLKLNDQAQRTVLCKDPFRSVDERVDKLIAGM.

A Mg(2+)-binding site is contributed by E9. Residue R53 participates in ATP binding. Y55 contributes to the Mg(2+) binding site. D57 (proton acceptor) is an active-site residue. E63 provides a ligand contact to Mg(2+). ATP-binding residues include T66 and W419.

Belongs to the Pup ligase/Pup deamidase family. Pup-conjugating enzyme subfamily.

It carries out the reaction ATP + [prokaryotic ubiquitin-like protein]-L-glutamate + [protein]-L-lysine = ADP + phosphate + N(6)-([prokaryotic ubiquitin-like protein]-gamma-L-glutamyl)-[protein]-L-lysine.. Its pathway is protein degradation; proteasomal Pup-dependent pathway. The protein operates within protein modification; protein pupylation. Functionally, catalyzes the covalent attachment of the prokaryotic ubiquitin-like protein modifier Pup to the proteasomal substrate proteins, thereby targeting them for proteasomal degradation. This tagging system is termed pupylation. The ligation reaction involves the side-chain carboxylate of the C-terminal glutamate of Pup and the side-chain amino group of a substrate lysine. The sequence is that of Pup--protein ligase from Streptosporangium roseum (strain ATCC 12428 / DSM 43021 / JCM 3005 / KCTC 9067 / NCIMB 10171 / NRRL 2505 / NI 9100).